Consider the following 592-residue polypeptide: Catabolite repression protein creC (592 aa).

Residues 119-140 (NSALAAAPVKDPSKKRKPKNNI) form a disordered region. WD repeat units follow at residues 248–288 (INSS…ALFI), 327–368 (LANQ…DVFR), 369–408 (SYYG…IIAR), and 411–455 (GHDS…LHRP). Disordered stretches follow at residues 459-513 (HQTS…HPVE) and 556-592 (WDRP…MGSL). Polar residues-rich tracts occupy residues 484–499 (SSGN…TAAD) and 564–576 (SDNY…SETL). The stretch at 529–566 (VGEDPICWLGFQEDTIMTSSLEGHIRTWDRPRENISDN) is one WD 5 repeat.

Belongs to the WD repeat creC family. As to quaternary structure, interacts with creB.

Its function is as follows. Component of the regulatory network controlling carbon source utilization through ubiquitination and deubiquitination involving creA, creB, creC, creD and acrB. Required to prevent the proteolysis of the CreB deubiquitinating enzyme in the absence of carbon catabolite repression. CreB deubiquitinating enzyme stabilized in a complex with the CreC leads to the expression of genes such as those in the proline and quinate pathways. In Emericella nidulans (strain FGSC A4 / ATCC 38163 / CBS 112.46 / NRRL 194 / M139) (Aspergillus nidulans), this protein is Catabolite repression protein creC (creC).